The primary structure comprises 373 residues: Anhydro-N-acetylmuramic acid kinase (373 aa).

Position 13 to 20 (13 to 20 (GTSMDGID)) interacts with ATP.

Belongs to the anhydro-N-acetylmuramic acid kinase family.

The catalysed reaction is 1,6-anhydro-N-acetyl-beta-muramate + ATP + H2O = N-acetyl-D-muramate 6-phosphate + ADP + H(+). It functions in the pathway amino-sugar metabolism; 1,6-anhydro-N-acetylmuramate degradation. It participates in cell wall biogenesis; peptidoglycan recycling. In terms of biological role, catalyzes the specific phosphorylation of 1,6-anhydro-N-acetylmuramic acid (anhMurNAc) with the simultaneous cleavage of the 1,6-anhydro ring, generating MurNAc-6-P. Is required for the utilization of anhMurNAc either imported from the medium or derived from its own cell wall murein, and thus plays a role in cell wall recycling. The protein is Anhydro-N-acetylmuramic acid kinase of Brucella suis (strain ATCC 23445 / NCTC 10510).